A 490-amino-acid polypeptide reads, in one-letter code: Cytochrome P450 2C26 (490 aa).

Heme is bound at residue cysteine 435.

Belongs to the cytochrome P450 family. Requires heme as cofactor.

It localises to the endoplasmic reticulum membrane. The protein resides in the microsome membrane. The enzyme catalyses an organic molecule + reduced [NADPH--hemoprotein reductase] + O2 = an alcohol + oxidized [NADPH--hemoprotein reductase] + H2O + H(+). Functionally, catalyzes the hydroxylation of tolbutamide and the N-demethylation of aminopyrine and benzphetamine. This chain is Cytochrome P450 2C26 (CYP2C26), found in Mesocricetus auratus (Golden hamster).